The chain runs to 321 residues: Homoserine kinase (321 aa).

It belongs to the pseudomonas-type ThrB family.

It catalyses the reaction L-homoserine + ATP = O-phospho-L-homoserine + ADP + H(+). It functions in the pathway amino-acid biosynthesis; L-threonine biosynthesis; L-threonine from L-aspartate: step 4/5. In Rhizobium johnstonii (strain DSM 114642 / LMG 32736 / 3841) (Rhizobium leguminosarum bv. viciae), this protein is Homoserine kinase.